The primary structure comprises 856 residues: DNA mismatch repair protein MutS (856 aa).

Gly600 to Ser607 is an ATP binding site.

This sequence belongs to the DNA mismatch repair MutS family.

In terms of biological role, this protein is involved in the repair of mismatches in DNA. It is possible that it carries out the mismatch recognition step. This protein has a weak ATPase activity. The protein is DNA mismatch repair protein MutS of Lactobacillus acidophilus (strain ATCC 700396 / NCK56 / N2 / NCFM).